The following is a 738-amino-acid chain: Glucan 1,4-alpha-glucosidase SusB (738 aa).

Residues 1 to 21 (MKKRKILSLIAFLCISFIANA) form the signal peptide. Glutamate 194 contacts Ca(2+). Substrate contacts are provided by residues 215 to 217 (PNS), 437 to 439 (HHE), and 507 to 508 (HE). The Ca(2+) site is built by glutamate 508, glutamate 526, and glutamate 532. The active-site Proton donor/acceptor is glutamate 532.

Belongs to the glycosyl hydrolase 97 family. As to quaternary structure, monomer. Ca(2+) serves as cofactor.

It localises to the periplasm. The catalysed reaction is Hydrolysis of terminal (1-&gt;4)-linked alpha-D-glucose residues successively from non-reducing ends of the chains with release of beta-D-glucose.. Its pathway is glycan degradation; starch degradation. Its function is as follows. Glucoamylase that hydrolyzes alpha-1,4-glucosidic linkages, alpha-1,6-, alpha-1,3- and alpha-1,2-glucosidic linkages during starch degradation. The chain is Glucan 1,4-alpha-glucosidase SusB (susB) from Bacteroides thetaiotaomicron (strain ATCC 29148 / DSM 2079 / JCM 5827 / CCUG 10774 / NCTC 10582 / VPI-5482 / E50).